We begin with the raw amino-acid sequence, 883 residues long: Probable ribonuclease ZC3H12C (883 aa).

2 disordered regions span residues 53–109 (QLSP…ISVE) and 139–158 (DFKP…PPDV). At Ser-230 the chain carries Phosphoserine. The RNase NYN domain maps to 245 to 400 (LRPIVIDGSN…LGRHGPSLDN (156 aa)). The C3H1-type zinc finger occupies 410-435 (EHKKQPCPYGKKCTYGHKCKYYHPER). Disordered stretches follow at residues 456–551 (AKTA…FPPQ), 680–738 (FHDP…KAPH), and 754–775 (SRLY…EGLG). Residues 466–477 (KSNSVPCSTKAD) are compositionally biased toward polar residues. Residues 503–515 (LEEKLPTKNKLET) show a composition bias toward basic and acidic residues. Over residues 517 to 542 (SVPSLVSIPATSTAKPQSTTSLSNGL) the composition is skewed to polar residues. A compositionally biased stretch (low complexity) spans 705–714 (HLALHLPHSA).

Belongs to the ZC3H12 family. Requires Mg(2+) as cofactor.

May function as RNase and regulate the levels of target RNA species. The sequence is that of Probable ribonuclease ZC3H12C (ZC3H12C) from Homo sapiens (Human).